We begin with the raw amino-acid sequence, 272 residues long: Dioscorin DB3L (272 aa).

An N-terminal signal peptide occupies residues 1–25; it reads MSSSTLFHLFLLSSLLFSCLSNARP. Residues 28–263 form the Alpha-carbonic anhydrase domain; it reads DDFSYIEGSP…LKFRTIFFYP (236 aa). A disulfide bridge links C53 with C213.

The protein belongs to the alpha-class carbonic anhydrase family. Homodimer; disulfide-linked. In terms of processing, not glycosylated. In terms of tissue distribution, expressed in tuber (at protein level).

Its activity is regulated as follows. Loss of hemagglutinating activity by EDTA treatment. The activity is fully recovered by the addition of 5 mM Ca(2+) ions, but not with Mg(2+) and Mn 2(+). Hemagglutination activity is inhibited by maltose and its derivatives, with maltopentaose and maltohexaose being the best inhibitors followed by maltose and iso maltose. Not inhibited by glycoproteins. In terms of biological role, maltose-binding lectin. No affinity is detected toward glucose. Has hemagglutinating activity against rabbit erythrocytes at 3.9 ug/ml. No carbonate dehydratase or trypsin inhibitor activity detected by measuring the hydrolysis of 4-nitrophenyl acetate or the inhibition of bovine trypsin-catalyzed hydrolysis of N-benzoyl-L-arginine ethyl ester, respectively. The polypeptide is Dioscorin DB3L (Dioscorea polystachya (Chinese yam)).